Consider the following 193-residue polypeptide: Large ribosomal subunit protein uL5 (193 aa).

It belongs to the universal ribosomal protein uL5 family. In terms of assembly, part of the 50S ribosomal subunit; part of the 5S rRNA/L5/L18/L25 subcomplex. Contacts the 5S rRNA and the P site tRNA. Forms a bridge to the 30S subunit in the 70S ribosome.

In terms of biological role, this is one of the proteins that bind and probably mediate the attachment of the 5S RNA into the large ribosomal subunit, where it forms part of the central protuberance. In the 70S ribosome it contacts protein S13 of the 30S subunit (bridge B1b), connecting the 2 subunits; this bridge is implicated in subunit movement. Contacts the P site tRNA; the 5S rRNA and some of its associated proteins might help stabilize positioning of ribosome-bound tRNAs. In Pseudarthrobacter chlorophenolicus (strain ATCC 700700 / DSM 12829 / CIP 107037 / JCM 12360 / KCTC 9906 / NCIMB 13794 / A6) (Arthrobacter chlorophenolicus), this protein is Large ribosomal subunit protein uL5.